The chain runs to 144 residues: Large ribosomal subunit protein uL16 (144 aa).

The protein belongs to the universal ribosomal protein uL16 family. As to quaternary structure, part of the 50S ribosomal subunit.

In terms of biological role, binds 23S rRNA and is also seen to make contacts with the A and possibly P site tRNAs. This is Large ribosomal subunit protein uL16 from Levilactobacillus brevis (strain ATCC 367 / BCRC 12310 / CIP 105137 / JCM 1170 / LMG 11437 / NCIMB 947 / NCTC 947) (Lactobacillus brevis).